The sequence spans 404 residues: Succinyl-diaminopimelate desuccinylase (404 aa).

Histidine 80 serves as a coordination point for Zn(2+). Aspartate 82 is an active-site residue. A Zn(2+)-binding site is contributed by aspartate 113. The Proton acceptor role is filled by glutamate 147. Glutamate 148, glutamate 176, and histidine 373 together coordinate Zn(2+).

The protein belongs to the peptidase M20A family. DapE subfamily. Homodimer. Requires Zn(2+) as cofactor. The cofactor is Co(2+).

The catalysed reaction is N-succinyl-(2S,6S)-2,6-diaminopimelate + H2O = (2S,6S)-2,6-diaminopimelate + succinate. Its pathway is amino-acid biosynthesis; L-lysine biosynthesis via DAP pathway; LL-2,6-diaminopimelate from (S)-tetrahydrodipicolinate (succinylase route): step 3/3. Catalyzes the hydrolysis of N-succinyl-L,L-diaminopimelic acid (SDAP), forming succinate and LL-2,6-diaminopimelate (DAP), an intermediate involved in the bacterial biosynthesis of lysine and meso-diaminopimelic acid, an essential component of bacterial cell walls. The sequence is that of Succinyl-diaminopimelate desuccinylase from Allorhizobium ampelinum (strain ATCC BAA-846 / DSM 112012 / S4) (Agrobacterium vitis (strain S4)).